We begin with the raw amino-acid sequence, 328 residues long: Beta-ketoacyl-[acyl-carrier-protein] synthase III (328 aa).

Catalysis depends on residues Cys113 and His253. The ACP-binding stretch occupies residues 254-258 (QANLR). Residue Asn283 is part of the active site.

It belongs to the thiolase-like superfamily. FabH family. Homodimer.

The protein resides in the cytoplasm. It carries out the reaction malonyl-[ACP] + acetyl-CoA + H(+) = 3-oxobutanoyl-[ACP] + CO2 + CoA. It functions in the pathway lipid metabolism; fatty acid biosynthesis. Functionally, catalyzes the condensation reaction of fatty acid synthesis by the addition to an acyl acceptor of two carbons from malonyl-ACP. Catalyzes the first condensation reaction which initiates fatty acid synthesis and may therefore play a role in governing the total rate of fatty acid production. Possesses both acetoacetyl-ACP synthase and acetyl transacylase activities. Its substrate specificity determines the biosynthesis of branched-chain and/or straight-chain of fatty acids. The protein is Beta-ketoacyl-[acyl-carrier-protein] synthase III of Fusobacterium nucleatum subsp. nucleatum (strain ATCC 25586 / DSM 15643 / BCRC 10681 / CIP 101130 / JCM 8532 / KCTC 2640 / LMG 13131 / VPI 4355).